The following is a 117-amino-acid chain: 3',5'-cyclic-AMP phosphodiesterase 4A (117 aa).

The interval 42 to 79 (KQNEVEIPSPTMKDREPQEAPRQRPCQQLPPPVPHLQP) is disordered. Residues 53–63 (MKDREPQEAPR) are compositionally biased toward basic and acidic residues. The tract at residues 78-117 (QPMSQITGVKRLSHNSGLNNASIPRFGVKTDQEELLAQEL) is catalytic.

Belongs to the cyclic nucleotide phosphodiesterase family. PDE4 subfamily. In terms of assembly, interacts with LYN (via SH3 domain). Interacts with ARRB2. Requires Zn(2+) as cofactor. Mg(2+) serves as cofactor. Mn(2+) is required as a cofactor. Proteolytically cleaved by CASP3.

The protein localises to the cytoplasm. It localises to the cytosol. The protein resides in the membrane. It catalyses the reaction 3',5'-cyclic AMP + H2O = AMP + H(+). The protein operates within purine metabolism; 3',5'-cyclic AMP degradation; AMP from 3',5'-cyclic AMP: step 1/1. Its function is as follows. Hydrolyzes the second messenger 3',5'-cyclic AMP (cAMP), which is a key regulator of many important physiological processes. The polypeptide is 3',5'-cyclic-AMP phosphodiesterase 4A (PDE4A) (Cavia porcellus (Guinea pig)).